Here is a 137-residue protein sequence, read N- to C-terminus: Glutamate mutase sigma subunit (137 aa).

The region spanning 3-137 (KKTIVLGVIG…ADLKEDLNIK (135 aa)) is the B12-binding domain. Adenosylcob(III)alamin is bound by residues 13–17 (SDCHA), histidine 16, 61–63 (SSL), and 93–97 (NIVVG).

The protein belongs to the methylaspartate mutase GlmS subunit family. Heterotetramer composed of 2 epsilon subunits (GlmE) and 2 sigma subunits (GlmS). GlmE exists as a homodimer and GlmS as a monomer. It depends on adenosylcob(III)alamin as a cofactor.

It catalyses the reaction (2S,3S)-3-methyl-L-aspartate = L-glutamate. The protein operates within amino-acid degradation; L-glutamate degradation via mesaconate pathway; acetate and pyruvate from L-glutamate: step 1/4. Catalyzes the carbon skeleton rearrangement of L-glutamate to L-threo-3-methylaspartate ((2S,3S)-3-methylaspartate). This Clostridium tetani (strain Massachusetts / E88) protein is Glutamate mutase sigma subunit.